The following is a 418-amino-acid chain: Tyrosine--tRNA ligase 1 (418 aa).

Tyrosine 34 is a binding site for L-tyrosine. The short motif at 39 to 48 (PTADSLHIGH) is the 'HIGH' region element. Residues tyrosine 169 and glutamine 173 each coordinate L-tyrosine. The 'KMSKS' region signature appears at 230–234 (KFGKT). Lysine 233 serves as a coordination point for ATP. Residues 352–418 (TVLIDLLVES…GKKKYFLIRY (67 aa)) enclose the S4 RNA-binding domain.

The protein belongs to the class-I aminoacyl-tRNA synthetase family. TyrS type 1 subfamily. In terms of assembly, homodimer.

The protein resides in the cytoplasm. It carries out the reaction tRNA(Tyr) + L-tyrosine + ATP = L-tyrosyl-tRNA(Tyr) + AMP + diphosphate + H(+). Catalyzes the attachment of tyrosine to tRNA(Tyr) in a two-step reaction: tyrosine is first activated by ATP to form Tyr-AMP and then transferred to the acceptor end of tRNA(Tyr). The protein is Tyrosine--tRNA ligase 1 of Bacillus cereus (strain ATCC 10987 / NRS 248).